The primary structure comprises 337 residues: MSIIVNQIVLHQLVKTSQDENTVQLKTHLRDELLPITAETEQMMLQLHQEYQNKTKAYGVFQETSNFAQILNRTLENDIDFLAFSHQSAELLRQELGKYSFANDGTLILCQYNFLATDYLFIALLDSRYSMLVDENLEIKQTHYLDITQFDIACRINLTELHLDAKSTRYLTFIKGRVGRKIADFFMDFLGAEEGLNPQVQNQCLLQAVSDYCQQADLTKEQTQAVKKQVFDYCKGQINVGEEIVVTELSANIPTLNEQSFVDFAVSQNYGLEENIPPVRTALKSLTKFSGSGKGITLSFDAELLNSRIFWDEATDSLTITGLPPNLRDQLQRQTKE.

The protein belongs to the YejK family.

Its subcellular location is the cytoplasm. It localises to the nucleoid. This is Nucleoid-associated protein HSM_0096 from Histophilus somni (strain 2336) (Haemophilus somnus).